A 242-amino-acid polypeptide reads, in one-letter code: Endoglucanase-5 (242 aa).

A signal peptide spans 1–17 (MKATLVLGSLIVGAVSA). The interval 18–182 (YKATTTRYYD…ETDPTPVLGN (165 aa)) is catalytic. Asp27 (nucleophile) is an active-site residue. The active-site Proton donor is Asp134. The interval 177–206 (TPVLGNDTGSTPPGSSPPATSSSPPSGGGQ) is disordered. Asn182 is a glycosylation site (N-linked (GlcNAc...) asparagine). The span at 184–201 (TGSTPPGSSPPATSSSPP) shows a compositional bias: low complexity. The CBM1 domain maps to 205 to 241 (GQQTLYGQCGGAGWTGPTTCQAPGTCKVQNQWYSQCL). 2 disulfide bridges follow: Cys213-Cys230 and Cys224-Cys240.

The protein belongs to the glycosyl hydrolase 45 (cellulase K) family.

The enzyme catalyses Endohydrolysis of (1-&gt;4)-beta-D-glucosidic linkages in cellulose, lichenin and cereal beta-D-glucans.. In Hypocrea jecorina (Trichoderma reesei), this protein is Endoglucanase-5 (egl5).